A 464-amino-acid polypeptide reads, in one-letter code: Aspartyl protease AED1 (464 aa).

The first 25 residues, 1–25 (MSIMRNFLSMIIMLCVCLNWCFAEG), serve as a signal peptide directing secretion. The Peptidase A1 domain occupies 132 to 460 (YIVTIGIGTP…DVAGGRVGFA (329 aa)). Catalysis depends on residues aspartate 150 and aspartate 345. An intrachain disulfide couples cysteine 384 to cysteine 425.

The protein belongs to the peptidase A1 family.

Its subcellular location is the secreted. The protein resides in the extracellular space. It localises to the apoplast. Its function is as follows. Aspartyl protease involved in a homeostatic feedback mechanism regulating systemic immunity. Has only mild or no influence on local defenses. Acts downstream of salicylic acid to suppress systemic immunity. In Arabidopsis thaliana (Mouse-ear cress), this protein is Aspartyl protease AED1.